The following is a 307-amino-acid chain: MKIIFMGSPEFAIPALKELVLSKHNVIAVFTSKPKKRDRYLNIQRSPIHKLASALSIPVYTPDSLKTNDVQNLIATFDADVIVVAAYGLIIPKAILKMKKYGCINIHPSMLPKYRGAAPIQRTIINGEKETAVCIIQMDQGVDTGDIILCQKFHLAKNICFSELHDQCAKVGAKLVVKAINYIHTLPRIPQSQDRASYAHKLSKSESKINWYESAYTIDCKIRGMNPWPGTFFTHNNCNIKVLKAKIVNNSHNLQPGTVKIANNDKLLVACQEHFLELLSLQLPGRKELSSDQFLCGYHILPDTVLQ.

109–112 (SMLP) contributes to the (6S)-5,6,7,8-tetrahydrofolate binding site.

Belongs to the Fmt family.

It carries out the reaction L-methionyl-tRNA(fMet) + (6R)-10-formyltetrahydrofolate = N-formyl-L-methionyl-tRNA(fMet) + (6S)-5,6,7,8-tetrahydrofolate + H(+). In terms of biological role, attaches a formyl group to the free amino group of methionyl-tRNA(fMet). The formyl group appears to play a dual role in the initiator identity of N-formylmethionyl-tRNA by promoting its recognition by IF2 and preventing the misappropriation of this tRNA by the elongation apparatus. In Orientia tsutsugamushi (strain Boryong) (Rickettsia tsutsugamushi), this protein is Methionyl-tRNA formyltransferase.